Consider the following 101-residue polypeptide: Small ribosomal subunit protein uS14 (101 aa).

Belongs to the universal ribosomal protein uS14 family. Part of the 30S ribosomal subunit. Contacts proteins S3 and S10.

Functionally, binds 16S rRNA, required for the assembly of 30S particles and may also be responsible for determining the conformation of the 16S rRNA at the A site. The sequence is that of Small ribosomal subunit protein uS14 from Blochmanniella pennsylvanica (strain BPEN).